We begin with the raw amino-acid sequence, 763 residues long: Translation initiation factor IF-2 (763 aa).

The disordered stretch occupies residues 52-178 (KQKKVQTSQN…KDEAIKHETK (127 aa)). Basic and acidic residues predominate over residues 65 to 82 (SNDENKKITNKNTEKTTE). Polar residues predominate over residues 86–96 (TVDSNKQNNSN). Basic and acidic residues-rich tracts occupy residues 105–116 (RNNDEESVSHFD) and 123–135 (KSEM…LNDK). Over residues 136–145 (KKNKNFKNTK) the composition is skewed to basic residues. Over residues 146 to 161 (NKNSNNNKNSKNNKNN) the composition is skewed to low complexity. Over residues 162-178 (KNNDHNRKDEAIKHETK) the composition is skewed to basic and acidic residues. In terms of domain architecture, tr-type G spans 265–434 (ERPPVITVMG…LMVAEMEELK (170 aa)). The interval 274–281 (GHVDHGKT) is G1. 274-281 (GHVDHGKT) lines the GTP pocket. Positions 299-303 (GITQH) are G2. The G3 stretch occupies residues 320–323 (DTPG). GTP contacts are provided by residues 320 to 324 (DTPGH) and 374 to 377 (NKID). Positions 374–377 (NKID) are G4. The segment at 410 to 412 (SAR) is G5.

The protein belongs to the TRAFAC class translation factor GTPase superfamily. Classic translation factor GTPase family. IF-2 subfamily.

The protein resides in the cytoplasm. In terms of biological role, one of the essential components for the initiation of protein synthesis. Protects formylmethionyl-tRNA from spontaneous hydrolysis and promotes its binding to the 30S ribosomal subunits. Also involved in the hydrolysis of GTP during the formation of the 70S ribosomal complex. The sequence is that of Translation initiation factor IF-2 from Finegoldia magna (strain ATCC 29328 / DSM 20472 / WAL 2508) (Peptostreptococcus magnus).